The primary structure comprises 272 residues: MAHLATVVLLLVAAARQAPLAAGDHSANPRLPTCAAAPDVAAPQEHGDGGGVGGGRRILDITHAVRAELPVLGSCDGVGALVRLKKSMANGSRSNLSELRMSVHTGTHVDAPGHMWQPHFDAGLDVDTLDLGLLNGPALLVDVPRHSNVTAEVMESLNIPRGVRRVLFRTMNTDKRLMWQKESDLSFVGFTEDGAQWLVGYTDIKLVGVDYLSVASYEHMIPAHVVFLKSKEIVIVEALKLDDVEPGMYMLHCLPLRLAGAEGSPVRCILIK.

Positions 1 to 17 (MAHLATVVLLLVAAARQ) are cleaved as a signal peptide.

This sequence belongs to the Cyclase 1 superfamily. Highly expressed in leaf sheaths and flag leaves. Expressed in roots, stems, leaf collars, glumes, young panicles and pistils.

It localises to the secreted. The protein resides in the extracellular space. Its subcellular location is the extracellular matrix. Its function is as follows. May be involved in response to stresses. This Oryza sativa subsp. japonica (Rice) protein is Cyclase-like protein 2.